The sequence spans 373 residues: P2Y purinoceptor 1 (373 aa).

Over 1–51 (MTEVLWPAAPNGTDAAFLASPGFHWGNSTATSTAAAAAPFRCALTKTGFQF) the chain is Extracellular. Asparagine 11 and asparagine 27 each carry an N-linked (GlcNAc...) asparagine glycan. Intrachain disulfides connect cysteine 42-cysteine 296 and cysteine 124-cysteine 202. Residue lysine 46 participates in ADP binding. The chain crosses the membrane as a helical span at residues 52–74 (YYLPAVYIVVFIIGFLGNSIAIW). The Cytoplasmic portion of the chain corresponds to 75–87 (MFVFHMKPWSGIS). A helical membrane pass occupies residues 88-109 (VYMFNLALADFLYVLTLPALIF). Residues 110 to 125 (YYFNKTNWIFGDAMCK) are Extracellular-facing. N-linked (GlcNAc...) asparagine glycosylation is present at asparagine 113. The chain crosses the membrane as a helical span at residues 126-147 (LQRFIFHVNLYGSILFLTCISA). Residues 148–166 (HRYSGVVYPLKSLGRLKKK) are Cytoplasmic-facing. A helical transmembrane segment spans residues 167–188 (NAVYISVLVWLIVVVAISPILF). At 189 to 214 (YSGTGIRKNKTITCYDTTSDEYLRSY) the chain is on the extracellular side. Asparagine 197 carries an N-linked (GlcNAc...) asparagine glycan. 203 to 205 (YDT) contributes to the ADP binding site. Residues 215 to 237 (FIYSMCTTVAMFCVPLVLILGCY) form a helical membrane-spanning segment. The Cytoplasmic segment spans residues 238–260 (GLIVRALIYKDLDNSPLRRKSIY). A helical membrane pass occupies residues 261–284 (LVIIVLTVFAVSYIPFHVMKTMNL). ADP contacts are provided by residues 283–287 (NLRAR), 303–306 (YATY), and arginine 310. The Extracellular segment spans residues 285–303 (RARLDFQTPEMCTFNDRVY). A helical membrane pass occupies residues 304-325 (ATYQVTRGLASLNSCVDPILYF). The Cytoplasmic segment spans residues 326–373 (LAGDTFRRRLSRATRKASRRSEANLQSKSEDMTLNILSEFKQNGDTSL).

The protein belongs to the G-protein coupled receptor 1 family.

It localises to the cell membrane. In terms of biological role, receptor for extracellular adenine nucleotides such as ADP. In platelets, binding to ADP leads to mobilization of intracellular calcium ions via activation of phospholipase C, a change in platelet shape, and ultimately platelet aggregation. In Cavia porcellus (Guinea pig), this protein is P2Y purinoceptor 1 (P2RY1).